A 190-amino-acid polypeptide reads, in one-letter code: UPF0200 protein MTH_434 (190 aa).

An ATP-binding site is contributed by 10–17 (GMPGAGKG).

Belongs to the UPF0200 family.

This is UPF0200 protein MTH_434 from Methanothermobacter thermautotrophicus (strain ATCC 29096 / DSM 1053 / JCM 10044 / NBRC 100330 / Delta H) (Methanobacterium thermoautotrophicum).